Reading from the N-terminus, the 435-residue chain is Protein phosphatase 2C homolog 2 (435 aa).

The region spanning 23 to 298 (IYGVSAMQGW…DNMTMIIIGL (276 aa)) is the PPM-type phosphatase domain. Residues Asp71, Gly72, Asp240, and Asp289 each contribute to the Mn(2+) site. Residues 366–435 (DQTEEDRDLP…TSGAPEKSTS (70 aa)) form a disordered region. Positions 381 to 392 (ELPDSARNEREG) are enriched in basic and acidic residues. The segment covering 409-418 (GSSASTSEST) has biased composition (low complexity). A compositionally biased stretch (polar residues) spans 419–435 (VTPAGSSTSGAPEKSTS).

It belongs to the PP2C family. Requires Mg(2+) as cofactor. The cofactor is Mn(2+).

It localises to the cytoplasm. Its subcellular location is the nucleus. It catalyses the reaction O-phospho-L-seryl-[protein] + H2O = L-seryl-[protein] + phosphate. The catalysed reaction is O-phospho-L-threonyl-[protein] + H2O = L-threonyl-[protein] + phosphate. Its function is as follows. Dephosphorylating regulator for many key proteins. Dephosphorylates phosphoglycerate kinase pgk1 at least on 'Ser-203' to negatively regulate targeting of pgk1 to the mitochondrion, thereby negatively regulating production of acetyl-CoA and consequently aflatoxin biosynthesis. In Aspergillus flavus (strain ATCC 200026 / FGSC A1120 / IAM 13836 / NRRL 3357 / JCM 12722 / SRRC 167), this protein is Protein phosphatase 2C homolog 2.